Consider the following 110-residue polypeptide: UPF0060 membrane protein Bcep18194_A4425 (110 aa).

4 helical membrane-spanning segments follow: residues 9 to 29 (ALFA…WLVL), 34 to 54 (PVWL…LLTL), 66 to 86 (YGGV…GVAL), and 88 to 108 (RWDV…ALQP).

The protein belongs to the UPF0060 family.

The protein resides in the cell inner membrane. The sequence is that of UPF0060 membrane protein Bcep18194_A4425 from Burkholderia lata (strain ATCC 17760 / DSM 23089 / LMG 22485 / NCIMB 9086 / R18194 / 383).